We begin with the raw amino-acid sequence, 584 residues long: Ubiquitin-like-specific protease 1D (584 aa).

Disordered stretches follow at residues D28–L64 and D99–E323. The segment covering D99–S120 has biased composition (basic and acidic residues). Positions K121 to V132 are enriched in low complexity. Composition is skewed to basic and acidic residues over residues D142–S165 and P176–E196. Positions R197–V207 are enriched in basic residues. Residues G221–M253 are compositionally biased toward basic and acidic residues. The span at I261–D274 shows a compositional bias: acidic residues. Basic and acidic residues predominate over residues T275–W286. Catalysis depends on residues H438, D461, and C525.

The protein belongs to the peptidase C48 family.

It is found in the nucleus speckle. Protease that catalyzes two essential functions in the SUMO pathway: processing of full-length SUMOs to their mature forms and deconjugation of SUMO from targeted proteins. Cleaves precursors of SUM1 and SUM2, but not of SUM3 or SUM5. Able to release SUM1 and SUM2 from conjugates, but unable to cleave SUM3. Protease activity mainly directed at deconjugating SUM1 and SUM2 from their target proteins. Regulates salt stress responses and flowering time. Redundant with ULP1C. This Arabidopsis thaliana (Mouse-ear cress) protein is Ubiquitin-like-specific protease 1D (ULP1D).